A 204-amino-acid polypeptide reads, in one-letter code: Thymidylate kinase (204 aa).

An ATP-binding site is contributed by 10 to 17; it reads GGDGAGKT.

It belongs to the thymidylate kinase family.

It carries out the reaction dTMP + ATP = dTDP + ADP. Functionally, phosphorylation of dTMP to form dTDP in both de novo and salvage pathways of dTTP synthesis. The polypeptide is Thymidylate kinase (Cutibacterium acnes (strain DSM 16379 / KPA171202) (Propionibacterium acnes)).